The following is a 154-amino-acid chain: NADPH-dependent 7-cyano-7-deazaguanine reductase (154 aa).

Positions 1 to 21 (MPNTDVSSLSMLGHQTETASS) are enriched in polar residues. Positions 1-26 (MPNTDVSSLSMLGHQTETASSPEEAV) are disordered. Cys52 serves as the catalytic Thioimide intermediate. Asp59 functions as the Proton donor in the catalytic mechanism. Substrate-binding positions include 74–76 (VES) and 93–94 (HE).

This sequence belongs to the GTP cyclohydrolase I family. QueF type 1 subfamily.

Its subcellular location is the cytoplasm. It carries out the reaction 7-aminomethyl-7-carbaguanine + 2 NADP(+) = 7-cyano-7-deazaguanine + 2 NADPH + 3 H(+). The protein operates within tRNA modification; tRNA-queuosine biosynthesis. In terms of biological role, catalyzes the NADPH-dependent reduction of 7-cyano-7-deazaguanine (preQ0) to 7-aminomethyl-7-deazaguanine (preQ1). This is NADPH-dependent 7-cyano-7-deazaguanine reductase from Rhizobium etli (strain ATCC 51251 / DSM 11541 / JCM 21823 / NBRC 15573 / CFN 42).